Consider the following 310-residue polypeptide: Olfactory receptor 5P55 (310 aa).

The Extracellular portion of the chain corresponds to 1–25 (METQNHTTVTEFILLGLTESSTLRV). Asn-5 is a glycosylation site (N-linked (GlcNAc...) asparagine). The helical transmembrane segment at 26–46 (ILFMVFLGIYTVTLVGNFSII) threads the bilayer. The Cytoplasmic segment spans residues 47–54 (SLIRSCPQ). Residues 55–75 (LHTPMYLFLSHLAFVDIGFST) traverse the membrane as a helical segment. The Extracellular segment spans residues 76-99 (SITPTMFKGFLGNRLVLSVAACIA). Cys-97 and Cys-189 are disulfide-bonded. The helical transmembrane segment at 100 to 120 (QFCITVTFGTVECFLLAVMAY) threads the bilayer. Topologically, residues 121-133 (DRYVAICSPLLYS) are cytoplasmic. The chain crosses the membrane as a helical span at residues 134 to 154 (THMSPRICFLLVGASYVGGCV). The Extracellular segment spans residues 155 to 196 (NSGAFTSCLSILSFCGPNQIDHFFCDFPAVLKLSCSDVSIIG). A helical transmembrane segment spans residues 197-217 (IIPSISAGSIIVITVFVIAVS). The Cytoplasmic portion of the chain corresponds to 218-237 (YAYILITILKMRSTEGRQKA). Residues 238 to 258 (FSTCTSHLTAVTLYYGTITFI) form a helical membrane-spanning segment. Residues 259–271 (YVMPKSNYSTAQN) lie on the Extracellular side of the membrane. An N-linked (GlcNAc...) asparagine glycan is attached at Asn-265. Residues 272-292 (KILSVFYTVVIPMLNPLIYSL) traverse the membrane as a helical segment. Residues 293-310 (RNRDVKEALRKAIIRIFP) lie on the Cytoplasmic side of the membrane.

It belongs to the G-protein coupled receptor 1 family.

The protein resides in the cell membrane. In terms of biological role, potential odorant receptor. The chain is Olfactory receptor 5P55 from Mus musculus (Mouse).